Reading from the N-terminus, the 404-residue chain is Serine/threonine transporter SstT (404 aa).

The next 8 membrane-spanning stretches (helical) occupy residues 17–37, 39–59, 75–95, 138–158, 179–199, 212–232, 287–307, and 313–333; these read IGIG…LTGF, ILGK…VFAL, MTLI…VAVL, ALAT…GLAL, IVVW…FTTI, FLIL…NPLI, IPLG…VLTL, and FGIP…AVSA.

Belongs to the dicarboxylate/amino acid:cation symporter (DAACS) (TC 2.A.23) family.

Its subcellular location is the cell membrane. It carries out the reaction L-serine(in) + Na(+)(in) = L-serine(out) + Na(+)(out). The enzyme catalyses L-threonine(in) + Na(+)(in) = L-threonine(out) + Na(+)(out). Its function is as follows. Involved in the import of serine and threonine into the cell, with the concomitant import of sodium (symport system). The sequence is that of Serine/threonine transporter SstT from Streptococcus pyogenes serotype M12 (strain MGAS2096).